The primary structure comprises 282 residues: Serine/arginine-rich splicing factor 8 (282 aa).

N-acetylserine is present on serine 2. Serine 2 and serine 26 each carry phosphoserine. Residues 14 to 92 enclose the RRM domain; the sequence is ITLKVDNLTY…RELRVQVARY (79 aa). Positions 91-282 are disordered; the sequence is RYGRRDLPRS…SPEEEGQMSS (192 aa). The span at 93 to 107 shows a compositional bias: basic and acidic residues; that stretch reads GRRDLPRSRQGEPRG. 2 stretches are compositionally biased toward basic residues: residues 116–136 and 144–154; these read RRSRSYGRRSRSPRRRHRSRS and SRSRSRYRGSR. Low complexity-rich tracts occupy residues 155–177 and 185–200; these read YSRSPYSRSPYSRSRYSRSPYSR and YGGSHYSSSGYSNSRY. A phosphoserine mark is found at serine 156, serine 158, serine 171, serine 173, and serine 196. A compositionally biased stretch (basic residues) spans 201-210; the sequence is SRYHSSRSHS. Low complexity-rich tracts occupy residues 211–227 and 234–255; these read KSGSSTSSRSASTSKSS and SSSVSRSRSRSRSSSMTRSPPR. Positions 256-271 are enriched in basic residues; that stretch reads VSKRKSKSRSRSKRPP. The residue at position 273 (serine 273) is a Phosphoserine.

Belongs to the splicing factor SR family. Strongly expressed in pancreas, spleen and prostate. Weakly expressed in lung, liver and thymus.

Its subcellular location is the nucleus. Functionally, involved in pre-mRNA alternative splicing. This chain is Serine/arginine-rich splicing factor 8 (SRSF8), found in Homo sapiens (Human).